The following is a 326-amino-acid chain: tRNA-modifying protein YgfZ (326 aa).

2 residues coordinate folate: tryptophan 27 and tryptophan 189.

It belongs to the tRNA-modifying YgfZ family.

The protein resides in the cytoplasm. Functionally, folate-binding protein involved in regulating the level of ATP-DnaA and in the modification of some tRNAs. It is probably a key factor in regulatory networks that act via tRNA modification, such as initiation of chromosomal replication. This Escherichia coli O6:K15:H31 (strain 536 / UPEC) protein is tRNA-modifying protein YgfZ.